The primary structure comprises 830 residues: Lon protease 3 (830 aa).

One can recognise a Lon N-terminal domain in the interval Val-19–Ile-213. Gly-367–Thr-374 lines the ATP pocket. The 181-residue stretch at Arg-604–Leu-784 folds into the Lon proteolytic domain. Active-site residues include Ser-690 and Lys-733. Over residues Pro-811–Thr-823 the composition is skewed to low complexity. A disordered region spans residues Pro-811–Ala-830.

The protein belongs to the peptidase S16 family. As to quaternary structure, homohexamer. Organized in a ring with a central cavity.

The protein localises to the cytoplasm. It carries out the reaction Hydrolysis of proteins in presence of ATP.. ATP-dependent serine protease that mediates the selective degradation of mutant and abnormal proteins as well as certain short-lived regulatory proteins. Required for cellular homeostasis and for survival from DNA damage and developmental changes induced by stress. Degrades polypeptides processively to yield small peptide fragments that are 5 to 10 amino acids long. Binds to DNA in a double-stranded, site-specific manner. The chain is Lon protease 3 from Sorangium cellulosum (strain So ce56) (Polyangium cellulosum (strain So ce56)).